A 143-amino-acid chain; its full sequence is Putative pre-16S rRNA nuclease (143 aa).

Belongs to the YqgF nuclease family.

The protein localises to the cytoplasm. Its function is as follows. Could be a nuclease involved in processing of the 5'-end of pre-16S rRNA. This is Putative pre-16S rRNA nuclease from Lactobacillus johnsonii (strain CNCM I-12250 / La1 / NCC 533).